The primary structure comprises 334 residues: o-succinylbenzoate synthase (334 aa).

The active-site Proton donor is the Lys-107. Positions 135, 162, and 185 each coordinate Mg(2+). The active-site Proton acceptor is Lys-209.

This sequence belongs to the mandelate racemase/muconate lactonizing enzyme family. MenC type 1 subfamily. The cofactor is a divalent metal cation.

It catalyses the reaction (1R,6R)-6-hydroxy-2-succinyl-cyclohexa-2,4-diene-1-carboxylate = 2-succinylbenzoate + H2O. The protein operates within quinol/quinone metabolism; 1,4-dihydroxy-2-naphthoate biosynthesis; 1,4-dihydroxy-2-naphthoate from chorismate: step 4/7. Its pathway is quinol/quinone metabolism; menaquinone biosynthesis. Converts 2-succinyl-6-hydroxy-2,4-cyclohexadiene-1-carboxylate (SHCHC) to 2-succinylbenzoate (OSB). In Mycobacterium leprae (strain TN), this protein is o-succinylbenzoate synthase.